A 612-amino-acid chain; its full sequence is Citryl-spermidine/3,4-dihydroxybenzoyl-citryl-spermidine:spermidine ligase (612 aa).

ATP is bound by residues 282–284 (SMR), lysine 298, arginine 310, tyrosine 390, and glutamate 461.

This sequence belongs to the IucA/IucC family. In terms of assembly, homodimer.

It catalyses the reaction N(8)-citryl-spermidine + spermidine + ATP = N(8),N'(8)-citryl-bis(spermidine) + AMP + diphosphate + H(+). The enzyme catalyses N(1)-(3,4-dihydroxybenzoyl)-N(8)-citryl-spermidine + spermidine + ATP = N(1)-(3,4-dihydroxybenzoyl)-N(8),N'(8)-citryl-bis(spermidine) + AMP + diphosphate + H(+). It functions in the pathway siderophore biosynthesis; petrobactin biosynthesis. Functionally, involved in the biosynthesis of petrobactin, a catecholate siderophore that functions in both iron acquisition and virulence. Catalyzes the ATP-dependent condensation of spermidine with N(8)-citryl-spermidine or N(1)-(3,4-dihydroxbenzoyl)-N(8)-citryl-spermidine, two intermediates in petrobactin biosynthesis pathway. In Bacillus anthracis, this protein is Citryl-spermidine/3,4-dihydroxybenzoyl-citryl-spermidine:spermidine ligase.